The chain runs to 508 residues: Histidine ammonia-lyase (508 aa).

A cross-link (5-imidazolinone (Ala-Gly)) is located at residues 143–145 (ASG). Position 144 is a 2,3-didehydroalanine (Ser) (Ser144).

This sequence belongs to the PAL/histidase family. In terms of processing, contains an active site 4-methylidene-imidazol-5-one (MIO), which is formed autocatalytically by cyclization and dehydration of residues Ala-Ser-Gly.

The protein resides in the cytoplasm. It catalyses the reaction L-histidine = trans-urocanate + NH4(+). Its pathway is amino-acid degradation; L-histidine degradation into L-glutamate; N-formimidoyl-L-glutamate from L-histidine: step 1/3. This Anaeromyxobacter dehalogenans (strain 2CP-C) protein is Histidine ammonia-lyase.